The chain runs to 437 residues: tRNA-2-methylthio-N(6)-dimethylallyladenosine synthase (437 aa).

Residues 1 to 115 (MKVYIETMGC…ISQVIHKEKA (115 aa)) enclose the MTTase N-terminal domain. [4Fe-4S] cluster-binding residues include cysteine 10, cysteine 46, cysteine 78, cysteine 148, cysteine 152, and cysteine 155. A Radical SAM core domain is found at 134 to 367 (KKAQIRSLLN…QNRHKEILEE (234 aa)). The region spanning 370-436 (KLEVGKTHVV…KGRLIAAIKG (67 aa)) is the TRAM domain.

It belongs to the methylthiotransferase family. MiaB subfamily. In terms of assembly, monomer. It depends on [4Fe-4S] cluster as a cofactor.

Its subcellular location is the cytoplasm. The enzyme catalyses N(6)-dimethylallyladenosine(37) in tRNA + (sulfur carrier)-SH + AH2 + 2 S-adenosyl-L-methionine = 2-methylsulfanyl-N(6)-dimethylallyladenosine(37) in tRNA + (sulfur carrier)-H + 5'-deoxyadenosine + L-methionine + A + S-adenosyl-L-homocysteine + 2 H(+). Catalyzes the methylthiolation of N6-(dimethylallyl)adenosine (i(6)A), leading to the formation of 2-methylthio-N6-(dimethylallyl)adenosine (ms(2)i(6)A) at position 37 in tRNAs that read codons beginning with uridine. This is tRNA-2-methylthio-N(6)-dimethylallyladenosine synthase from Helicobacter pylori (strain P12).